The sequence spans 93 residues: Protein 6 (93 aa).

The segment covering methionine 1–histidine 16 has biased composition (polar residues). The disordered stretch occupies residues methionine 1–aspartate 52.

The protein resides in the virion. This is Protein 6 (6) from Rice yellow stunt virus (RYSV).